We begin with the raw amino-acid sequence, 83 residues long: Greglin (83 aa).

Phosphoserine occurs at positions 8, 11, and 15. 4 cysteine pairs are disulfide-bonded: C21–C55, C25–C48, C33–C69, and C53–C76.

In terms of biological role, serine protease inhibitor. Inhibits porcine pancreatic elastase with a Ki of 58.3 nM, human neutrophil elastase with a Ki of 3.6 nM, cathepsin G with a Ki of 153.5 nM, chymotrypsin with a Ki of 26.7 nM and subtilisin with a Ki of 0.68 nM. Does not inhibit neutrophil protease 3 or pancreatic trypsin. The protein is Greglin of Schistocerca gregaria (Desert locust).